We begin with the raw amino-acid sequence, 334 residues long: TPR repeat-containing protein MJ0798 (334 aa).

TPR repeat units lie at residues tryptophan 102 to threonine 135, leucine 137 to asparagine 168, tyrosine 169 to aspartate 202, glutamate 204 to aspartate 235, isoleucine 236 to valine 269, glutamate 273 to histidine 306, and glutamate 308 to leucine 333.

The protein is TPR repeat-containing protein MJ0798 of Methanocaldococcus jannaschii (strain ATCC 43067 / DSM 2661 / JAL-1 / JCM 10045 / NBRC 100440) (Methanococcus jannaschii).